A 178-amino-acid polypeptide reads, in one-letter code: Alkyl hydroperoxide reductase AhpD (178 aa).

Cys-131 serves as the catalytic Proton donor. Cys-131 and Cys-134 are oxidised to a cystine. Cys-134 serves as the catalytic Cysteine sulfenic acid (-SOH) intermediate.

The protein belongs to the AhpD family. Homotrimer.

It catalyses the reaction N(6)-[(R)-dihydrolipoyl]-L-lysyl-[lipoyl-carrier protein] + a hydroperoxide = N(6)-[(R)-lipoyl]-L-lysyl-[lipoyl-carrier protein] + an alcohol + H2O. Antioxidant protein with alkyl hydroperoxidase activity. Required for the reduction of the AhpC active site cysteine residues and for the regeneration of the AhpC enzyme activity. The sequence is that of Alkyl hydroperoxide reductase AhpD from Streptomyces coelicolor (strain ATCC BAA-471 / A3(2) / M145).